A 280-amino-acid chain; its full sequence is UBX domain-containing protein 10 (280 aa).

The interval 41–94 is disordered; sequence SAKGRTRPSLQKSQGVEVCAHHIPSPPPAIPYELPSSQKPGACAPKSPNQGASD. S87 is modified (phosphoserine). Residues 194 to 271 enclose the UBX domain; sequence DQEPRLLLAV…RIPHKSVLGI (78 aa).

It belongs to the UBXN10 family. As to quaternary structure, interacts with CLUAP1; the interaction is direct and mediates interaction with the intraflagellar transport complex B (IFT-B). Interacts with VCP; the interaction is direct.

Its subcellular location is the cell projection. It localises to the cilium. In terms of biological role, VCP/p97-binding protein required for ciliogenesis. Acts as a tethering factor that facilitates recruitment of VCP/p97 to the intraflagellar transport complex B (IFT-B) in cilia. UBX domain-containing proteins act as tethering factors for VCP/p97 and may specify substrate specificity of VCP/p97. The sequence is that of UBX domain-containing protein 10 from Homo sapiens (Human).